Here is a 578-residue protein sequence, read N- to C-terminus: Oxygen sensor histidine kinase response regulator DevS/DosS (578 aa).

GAF domains lie at 63-200 and 231-369; these read DLEA…GIAV and EPAT…ALAW. Position 149 (H149) interacts with heme. Residues 383 to 578 enclose the Histidine kinase domain; the sequence is VLTDRDRIAR…VLRWSAPLSQ (196 aa). H395 is modified (phosphohistidine; by autocatalysis).

It depends on Mg(2+) as a cofactor. Heme serves as cofactor.

It localises to the cytoplasm. It carries out the reaction ATP + protein L-histidine = ADP + protein N-phospho-L-histidine.. Its function is as follows. Member of the two-component regulatory system DevR/DevS (DosR/DosS) involved in onset of the dormancy response. Regulates an approximately 48-member regulon. Required for full induction of the DevR (DosR) regulon; acts later than DosT to positively regulate expression of the DevR regulon during adaptation to anaerobiosis. Characterized as an oxygen sensor; O(2) acts as a switch, with O(2)-bound Fe(2+) protein inactive in autophosphorylation. Has also been suggested to act as a redox sensor, or perhaps as a dual oxygen/redox sensor. Donates a phosphate group to transcriptional regulator DevR (DosR). This Mycobacterium tuberculosis (strain CDC 1551 / Oshkosh) protein is Oxygen sensor histidine kinase response regulator DevS/DosS (devS).